The primary structure comprises 260 residues: NADH-ubiquinone oxidoreductase chain 6 (260 aa).

Helical transmembrane passes span 2–22 (LTNY…FMII), 30–50 (SILY…ILGV), 52–72 (FIAI…FLFV), 101–121 (FLFQ…FGLF), 142–162 (VPSG…NLGI), and 211–231 (FFIF…SIIL).

This sequence belongs to the complex I subunit 6 family.

The protein localises to the mitochondrion membrane. It catalyses the reaction a ubiquinone + NADH + 5 H(+)(in) = a ubiquinol + NAD(+) + 4 H(+)(out). Core subunit of the mitochondrial membrane respiratory chain NADH dehydrogenase (Complex I) that is believed to belong to the minimal assembly required for catalysis. Complex I functions in the transfer of electrons from NADH to the respiratory chain. The immediate electron acceptor for the enzyme is believed to be ubiquinone. This chain is NADH-ubiquinone oxidoreductase chain 6 (ND6), found in Acanthamoeba castellanii (Amoeba).